A 608-amino-acid polypeptide reads, in one-letter code: Developmental regulatory protein wetA (608 aa).

Disordered regions lie at residues 54–88 (ADHH…GVST), 102–125 (VDAT…VDPR), 146–186 (VSMS…MTRK), 202–226 (SKLR…NPPR), 309–352 (WPHQ…HAVP), 447–544 (AQTY…GDIG), and 556–576 (LMTG…EREA). Composition is skewed to low complexity over residues 77 to 88 (ESTASASSGVST), 107 to 119 (PSQP…PGAS), and 163 to 175 (SSPG…SQPS). Basic residues predominate over residues 313-338 (QHPHPHPHPHHPQAHTHPHPHPHPHP). Low complexity-rich tracts occupy residues 339–350 (HQQAVAGHPQHA) and 502–517 (SSNG…SGRG).

Belongs to the wetA family.

AbaA and wetA are pivotal regulators of conidiophore development and conidium maturation. They act individually and together to regulate their own expression and that of numerous other sporulation-specific genes. Functions to maintain conidial dormancy by suppressing microcycle conidiation. This chain is Developmental regulatory protein wetA, found in Gibberella zeae (strain ATCC MYA-4620 / CBS 123657 / FGSC 9075 / NRRL 31084 / PH-1) (Wheat head blight fungus).